A 484-amino-acid chain; its full sequence is PTS system MurNAc-GlcNAc-specific EIIBC component (484 aa).

Positions 5 to 87 constitute a PTS EIIB type-1 domain; the sequence is QQLAERIIAA…AELSGVKLGD (83 aa). C27 (phosphocysteine intermediate; for EIIB activity) is an active-site residue. The region spanning 130-484 is the PTS EIIC type-1 domain; it reads KSIANIFIPL…AMRQTDLLGD (355 aa). 10 consecutive transmembrane segments (helical) span residues 135–155, 160–180, 200–220, 234–254, 274–294, 305–325, 349–369, 384–404, 408–428, and 450–470; these read IFIPLIPAFIGAGLIGGIAAV, MVAGYISGAWITQLITVFNVI, FGATPGLGGVIGGTTLLTGIA, LQPGQGGIIGVIFAVWILSIV, IALLIVGLLTIFIFMPLAGFV, IISIGGVFSGFIIGASFLPLV, LLPIAAMAGAGQVGAALALWV, ALPVGFLGIGEPLIYGVTLPL, FLTACIGGGIGGAVIGGIGHI, and LGYIAGLLAAYAGGFVCTYLF.

The protein resides in the cell membrane. It catalyses the reaction N-acetyl-beta-D-muramate-(1-&gt;4)-N-acetyl-D-glucosamine(out) + N(pros)-phospho-L-histidyl-[protein] = 6-phospho-N-acetyl-beta-D-muramate-(1-&gt;4)-N-acetyl-D-glucosamine(in) + L-histidyl-[protein]. It participates in cell wall biogenesis; peptidoglycan recycling. Functionally, the phosphoenolpyruvate-dependent sugar phosphotransferase system (sugar PTS), a major carbohydrate active transport system, catalyzes the phosphorylation of incoming sugar substrates concomitantly with their translocation across the cell membrane. This system is involved in the uptake and phosphorylation of MurNAc-GlcNAc, the principle peptidoglycan turnover product of S.aureus, yielding cytoplasmic MurNAc 6P-GlcNAc. In Staphylococcus aureus (strain Mu50 / ATCC 700699), this protein is PTS system MurNAc-GlcNAc-specific EIIBC component.